The primary structure comprises 1121 residues: RecBCD enzyme subunit RecC (1121 aa).

This sequence belongs to the RecC family. Heterotrimer of RecB, RecC and RecD. All subunits contribute to DNA-binding.

A helicase/nuclease that prepares dsDNA breaks (DSB) for recombinational DNA repair. Binds to DSBs and unwinds DNA via a highly rapid and processive ATP-dependent bidirectional helicase activity. Unwinds dsDNA until it encounters a Chi (crossover hotspot instigator) sequence from the 3' direction. Cuts ssDNA a few nucleotides 3' to the Chi site. The properties and activities of the enzyme are changed at Chi. The Chi-altered holoenzyme produces a long 3'-ssDNA overhang and facilitates RecA-binding to the ssDNA for homologous DNA recombination and repair. Holoenzyme degrades any linearized DNA that is unable to undergo homologous recombination. In the holoenzyme this subunit recognizes the wild-type Chi sequence, and when added to isolated RecB increases its ATP-dependent helicase processivity. The sequence is that of RecBCD enzyme subunit RecC from Haemophilus influenzae (strain ATCC 51907 / DSM 11121 / KW20 / Rd).